The chain runs to 252 residues: Thiazole synthase (252 aa).

Residue lysine 91 is the Schiff-base intermediate with DXP of the active site. 1-deoxy-D-xylulose 5-phosphate-binding positions include glycine 152, 179–180 (AG), and 201–202 (NT).

The protein belongs to the ThiG family. Homotetramer. Forms heterodimers with either ThiH or ThiS.

It localises to the cytoplasm. It carries out the reaction [ThiS sulfur-carrier protein]-C-terminal-Gly-aminoethanethioate + 2-iminoacetate + 1-deoxy-D-xylulose 5-phosphate = [ThiS sulfur-carrier protein]-C-terminal Gly-Gly + 2-[(2R,5Z)-2-carboxy-4-methylthiazol-5(2H)-ylidene]ethyl phosphate + 2 H2O + H(+). Its pathway is cofactor biosynthesis; thiamine diphosphate biosynthesis. Its function is as follows. Catalyzes the rearrangement of 1-deoxy-D-xylulose 5-phosphate (DXP) to produce the thiazole phosphate moiety of thiamine. Sulfur is provided by the thiocarboxylate moiety of the carrier protein ThiS. In vitro, sulfur can be provided by H(2)S. This chain is Thiazole synthase, found in Erwinia amylovora (Fire blight bacteria).